The chain runs to 1064 residues: Leucine--tRNA ligase (1064 aa).

Positions 1-25 (MARAMSETAEPGARTGAADTTVAPT) are disordered. The 'HIGH' region motif lies at 106-117 (PYPSGSGLHVGH). Residues 435–456 (GRPGGGTEPADTAGPEAGADPA) are disordered. Positions 831–835 (KMGKS) match the 'KMSKS' region motif. Lysine 834 contributes to the ATP binding site.

The protein belongs to the class-I aminoacyl-tRNA synthetase family.

The protein resides in the cytoplasm. The enzyme catalyses tRNA(Leu) + L-leucine + ATP = L-leucyl-tRNA(Leu) + AMP + diphosphate. This chain is Leucine--tRNA ligase, found in Frankia casuarinae (strain DSM 45818 / CECT 9043 / HFP020203 / CcI3).